The sequence spans 261 residues: Cobalt-precorrin-6A reductase (261 aa).

The protein belongs to the precorrin-6x reductase family.

The enzyme catalyses Co-precorrin-6B + NAD(+) = Co-precorrin-6A + NADH + H(+). Its pathway is cofactor biosynthesis; adenosylcobalamin biosynthesis; cob(II)yrinate a,c-diamide from sirohydrochlorin (anaerobic route): step 7/10. Functionally, catalyzes the reduction of the macrocycle of cobalt-precorrin-6A to cobalt-precorrin-6B. The chain is Cobalt-precorrin-6A reductase (cbiJ) from Synechocystis sp. (strain ATCC 27184 / PCC 6803 / Kazusa).